A 291-amino-acid polypeptide reads, in one-letter code: GTPase Era (291 aa).

Residues 2–167 (KSGFVSIIGR…LDEIVKYLDK (166 aa)) enclose the Era-type G domain. The segment at 10 to 17 (GRTNAGKS) is G1. 10–17 (GRTNAGKS) lines the GTP pocket. Residues 36–40 (NATRR) form a G2 region. The tract at residues 57–60 (DTPG) is G3. GTP contacts are provided by residues 57 to 61 (DTPGL) and 116 to 119 (NKVD). A G4 region spans residues 116-119 (NKVD). Positions 146–148 (YSS) are G5. Positions 186-274 (YRDFILESIY…LLKLFVTVKK (89 aa)) constitute a KH type-2 domain.

Belongs to the TRAFAC class TrmE-Era-EngA-EngB-Septin-like GTPase superfamily. Era GTPase family. Monomer.

It is found in the cytoplasm. Its subcellular location is the cell inner membrane. Its function is as follows. An essential GTPase that binds both GDP and GTP, with rapid nucleotide exchange. Plays a role in 16S rRNA processing and 30S ribosomal subunit biogenesis and possibly also in cell cycle regulation and energy metabolism. The sequence is that of GTPase Era from Campylobacter jejuni subsp. jejuni serotype O:6 (strain 81116 / NCTC 11828).